The sequence spans 649 residues: SKQQASQVLVRKRRANSMLEETKQGNLERECIEELCNKEEAREVFENDPETDYFYPKYLVCLRSFQSGLFTAARQSTDAYPDLRSCVNAIPDQCSPLPCNEDGYMSCKDGKASFTCTCKPGWQGERCEFDINECKDPSNINGGCSQICDNTPGSYHCSCKSGFVMLSNKKDCKDVDECSLKPNMCGTAVCKNIPGDFECECPEGYRYNLKSKSCEDVDECSENMCAQLCVNYPGGYTCYCDGKKGFKLAQDQKSCEAVSVCLPLNLDTKYELLYLAEQFAGVVLYLKFRLPEISRFSAEFDFRTYDSQGVILYAESIDHSAWLLIALRGGKIEVQLKNEHTSKITTGGDIINNGLWNMVSVEELEHSISIKIAKEAVMDINKPGPLFKPENGLLETKVYFAGFPRKVESELIKPINPRLDGCIRSWNLMKQGASGIKEIIQEKQNKHCLVTVEKGSYYPGSGIAEFHIDYNNGSNAEGWHINVTLNIRPSTGTGVMLALVSSNNTVPFAVSLVDSTSEKSQDIVISVENTVIYRIQALSLCSYQRSHLEFRVNRNNLELLTPLKIETISQEELQTQLAILDKAMKGKVATYLGGLPDVPFSATPVNAFYNGCMEVNINGVELDLDEAISKHNDIRAHSCPSVWKKTKNS.

The propeptide occupies 1 to 14 (SKQQASQVLVRKRR). The Gla domain maps to 15-60 (ANSMLEETKQGNLERECIEELCNKEEAREVFENDPETDYFYPKYLV). 4-carboxyglutamate is present on residues Glu20, Glu21, Glu28, Glu30, Glu33, Glu34, Glu39, Glu40, Glu43, Glu46, and Glu50. Cys31 and Cys36 are oxidised to a cystine. The segment at 61-89 (CLRSFQSGLFTAARQSTDAYPDLRSCVNA) is thrombin-sensitive. Residues 90-128 (IPDQCSPLPCNEDGYMSCKDGKASFTCTCKPGWQGERCE) enclose the EGF-like 1 domain. Cystine bridges form between Cys94–Cys107, Cys99–Cys116, Cys118–Cys127, Cys134–Cys148, Cys144–Cys157, Cys159–Cys172, Cys178–Cys190, Cys185–Cys199, Cys201–Cys214, Cys220–Cys229, Cys225–Cys238, Cys240–Cys255, and Cys422–Cys448. (3R)-3-hydroxyaspartate is present on Asp109. Positions 130–173 (DINECKDPSNINGGCSQICDNTPGSYHCSCKSGFVMLSNKKDCK) constitute an EGF-like 2; calcium-binding domain. The EGF-like 3; calcium-binding domain maps to 174 to 215 (DVDECSLKPNMCGTAVCKNIPGDFECECPEGYRYNLKSKSCE). The region spanning 216 to 256 (DVDECSENMCAQLCVNYPGGYTCYCDGKKGFKLAQDQKSCE) is the EGF-like 4; calcium-binding domain. Laminin G-like domains are found at residues 272-448 (LLYL…NKHC) and 457-639 (YYPG…AHSC). Asn472, Asn482, and Asn503 each carry an N-linked (GlcNAc...) asparagine glycan. Cys612 and Cys639 are disulfide-bonded.

The iron and 2-oxoglutarate dependent 3-hydroxylation of aspartate and asparagine is (R) stereospecific within EGF domains. As to expression, plasma.

The protein resides in the secreted. Functionally, anticoagulant plasma protein; it is a cofactor to activated protein C in the degradation of coagulation factors Va and VIIIa. It helps to prevent coagulation and stimulating fibrinolysis. The chain is Vitamin K-dependent protein S (PROS1) from Macaca mulatta (Rhesus macaque).